The chain runs to 66 residues: Small vasohibin-binding protein (66 aa).

Over residues 1 to 23 the composition is skewed to basic and acidic residues; it reads MDPPARKEKSKVKEPAFRVEKAK. The disordered stretch occupies residues 1 to 30; that stretch reads MDPPARKEKSKVKEPAFRVEKAKQKSAQQE. The stretch at 5 to 52 forms a coiled coil; it reads ARKEKSKVKEPAFRVEKAKQKSAQQELKQRQRAEIYALNRVMTELEQQ.

This sequence belongs to the SVBP family. As to quaternary structure, interacts with VASH1 and VASH2. As to expression, highly expressed in bone marrow, spleen and testis.

The protein resides in the cytoplasm. The protein localises to the secreted. It localises to the cytoskeleton. Functionally, enhances the tyrosine carboxypeptidase activity of VASH1 and VASH2, thereby promoting the removal of the C-terminal tyrosine residue of alpha-tubulin. Also required to enhance the solubility and secretion of VASH1 and VASH2. Plays a role in axon and excitatory synapse formation. This chain is Small vasohibin-binding protein, found in Mus musculus (Mouse).